Reading from the N-terminus, the 304-residue chain is HPr kinase/phosphorylase (304 aa).

Active-site residues include H136 and K157. An ATP-binding site is contributed by 151–158 (GESGIGKS). Position 158 (S158) interacts with Mg(2+). D175 (proton acceptor; for phosphorylation activity. Proton donor; for dephosphorylation activity) is an active-site residue. The segment at 198–207 (LEVRGIGIID) is important for the catalytic mechanism of both phosphorylation and dephosphorylation. E199 serves as a coordination point for Mg(2+). R240 is an active-site residue. An important for the catalytic mechanism of dephosphorylation region spans residues 261-266 (PVRPGR).

It belongs to the HPrK/P family. As to quaternary structure, homohexamer. Requires Mg(2+) as cofactor.

It catalyses the reaction [HPr protein]-L-serine + ATP = [HPr protein]-O-phospho-L-serine + ADP + H(+). It carries out the reaction [HPr protein]-O-phospho-L-serine + phosphate + H(+) = [HPr protein]-L-serine + diphosphate. Its function is as follows. Catalyzes the ATP- as well as the pyrophosphate-dependent phosphorylation of a specific serine residue in HPr, a phosphocarrier protein of the phosphoenolpyruvate-dependent sugar phosphotransferase system (PTS). HprK/P also catalyzes the pyrophosphate-producing, inorganic phosphate-dependent dephosphorylation (phosphorolysis) of seryl-phosphorylated HPr (P-Ser-HPr). The two antagonistic activities of HprK/P are regulated by several intracellular metabolites, which change their concentration in response to the absence or presence of rapidly metabolisable carbon sources (glucose, fructose, etc.) in the growth medium. Therefore, by controlling the phosphorylation state of HPr, HPrK/P is a sensor enzyme that plays a major role in the regulation of carbon metabolism and sugar transport: it mediates carbon catabolite repression (CCR), and regulates PTS-catalyzed carbohydrate uptake and inducer exclusion. In Clostridium botulinum (strain Alaska E43 / Type E3), this protein is HPr kinase/phosphorylase.